The primary structure comprises 392 residues: tRNA (guanine-N(7)-)-methyltransferase (392 aa).

The S-adenosyl-L-methionine site is built by Glu123, Glu148, and Asp175. Substrate contacts are provided by Lys201 and Asp231.

Belongs to the class I-like SAM-binding methyltransferase superfamily. TrmB family.

The catalysed reaction is guanosine(46) in tRNA + S-adenosyl-L-methionine = N(7)-methylguanosine(46) in tRNA + S-adenosyl-L-homocysteine. Its pathway is tRNA modification; N(7)-methylguanine-tRNA biosynthesis. In terms of biological role, catalyzes the formation of N(7)-methylguanine at position 46 (m7G46) in tRNA. In Campylobacter jejuni subsp. doylei (strain ATCC BAA-1458 / RM4099 / 269.97), this protein is tRNA (guanine-N(7)-)-methyltransferase.